Here is a 362-residue protein sequence, read N- to C-terminus: HLA class I histocompatibility antigen, B alpha chain (362 aa).

The N-terminal stretch at 1–24 (MLVMAPRTVLLLLSAALALTETWA) is a signal peptide. The segment at 3–11 (VMAPRTVLL) is VL9 epitope. The segment at 25–114 (GSHSMRYFYT…LRGYYNQSEA (90 aa)) is alpha-1. Over 25–309 (GSHSMRYFYT…PSSQSTVPIV (285 aa)) the chain is Extracellular. Asn87 provides a ligand contact to a peptide antigen. Residues 101-107 (SLRNLRG) carry the Bw6 motif motif. Tyr108 is a binding site for a peptide antigen. N-linked (GlcNAc...) asparagine glycosylation is present at Asn110. Positions 115-206 (GSHTLQSMYG…ENGKDKLERA (92 aa)) are alpha-2. A disulfide bridge links Cys125 with Cys188. A peptide antigen-binding residues include Thr167, Lys170, Glu176, Tyr183, and Tyr195. The interval 207–298 (DPPKTHVTHH…GLPKPLTLRW (92 aa)) is alpha-3. Residues 209–295 (PKTHVTHHPI…QHEGLPKPLT (87 aa)) form the Ig-like C1-type domain. Cys227 and Cys283 are oxidised to a cystine. The interval 299–309 (EPSSQSTVPIV) is connecting peptide. Residues 310–333 (GIVAGLAVLAVVVIGAVVAAVMCR) form a helical membrane-spanning segment. Residues 334 to 362 (RKSSGGKGGSYSQAACSDSAQGSDVSLTA) are Cytoplasmic-facing. Residues 337-362 (SGGKGGSYSQAACSDSAQGSDVSLTA) are disordered. Residues 346 to 362 (QAACSDSAQGSDVSLTA) are compositionally biased toward polar residues.

Heterotrimer that consists of an alpha chain HLA-B, a beta chain B2M and a peptide (peptide-HLA-B-B2M). Early in biogenesis, HLA-B-B2M dimer interacts with the components of the peptide-loading complex composed of TAPBP, TAP1-TAP2, TAPBPL, PDIA3/ERP57 and CALR. Interacts with TAP1-TAP2 transporter via TAPBP; this interaction is obligatory for the loading of peptide epitopes delivered to the ER by TAP1-TAP2 transporter. Interacts with TAPBPL; TAPBPL binds peptide-free HLA-B-B2M complexes or those loaded with low affinity peptides, likely facilitating peptide exchange for higher affinity peptides. Only optimally assembled peptide-HLA-B-B2M trimer translocates to the surface of antigen-presenting cells, where it interacts with TCR and CD8 coreceptor on the surface of T cells. HLA-B (via polymorphic alpha-1 and alpha-2 domains) interacts with antigen-specific TCR (via CDR1, CDR2 and CDR3 domains). One HLA-B molecule (mainly via nonpolymorphic alpha-3 domain) interacts with one CD8A homodimer (via CDR-like loop); this interaction ensures peptide-HLA-B-B2M recognition by CD8-positive T cells only. Allele B*57:01 interacts (via Bw4 motif) with KIR3DL1 (via Ig-like C2-type domain); this interaction may interfere with peptide binding. Allele B*46:01 interacts with KIR2DL3. In terms of assembly, (Microbial infection) Interacts with HTLV-1 accessory protein p12I.

It localises to the cell membrane. The protein resides in the endoplasmic reticulum membrane. Functionally, antigen-presenting major histocompatibility complex class I (MHCI) molecule. In complex with B2M/beta 2 microglobulin displays primarily viral and tumor-derived peptides on antigen-presenting cells for recognition by alpha-beta T cell receptor (TCR) on HLA-B-restricted CD8-positive T cells, guiding antigen-specific T cell immune response to eliminate infected or transformed cells. May also present self-peptides derived from the signal sequence of secreted or membrane proteins, although T cells specific for these peptides are usually inactivated to prevent autoreactivity. Both the peptide and the MHC molecule are recognized by TCR, the peptide is responsible for the fine specificity of antigen recognition and MHC residues account for the MHC restriction of T cells. Typically presents intracellular peptide antigens of 8 to 13 amino acids that arise from cytosolic proteolysis via constitutive proteasome and IFNG-induced immunoproteasome. Can bind different peptides containing allele-specific binding motifs, which are mainly defined by anchor residues at position 2 and 9. In terms of biological role, allele B*07:02: Displays peptides sharing a common signature motif, namely a Pro residue at position 2 and mainly a Leu anchor residue at the C-terminus. Presents a long peptide (APRGPHGGAASGL) derived from the cancer-testis antigen CTAG1A/NY-ESO-1, eliciting a polyclonal CD8-positive T cell response against tumor cells. Presents viral epitopes derived from HIV-1 gag-pol (TPQDLNTML) and Nef (RPQVPLRPM). Presents an immunodominant epitope derived from SARS-CoV-2 N/nucleoprotein (SPRWYFYYL). Displays self-peptides including a peptide derived from the signal sequence of HLA-DPB1 (APRTVALTA). Its function is as follows. Allele B*08:01: Presents to CD8-positive T cells viral epitopes derived from EBV/HHV-4 EBNA3 (QAKWRLQTL), eliciting cytotoxic T cell response. Allele B*13:02: Presents multiple HIV-1 epitopes derived from gag (RQANFLGKI, GQMREPRGSDI), nef (RQDILDLWI), gag-pol (RQYDQILIE, GQGQWTYQI) and rev (LQLPPLERL), all having in common a Gln residue at position 2 and mainly hydrophobic amino acids Leu, Ile or Val at the C-terminus. Associated with successful control of HIV-1 infection. Functionally, allele B*18:01: Preferentially presents octomeric and nonameric peptides sharing a common motif, namely a Glu at position 2 and Phe or Tyr anchor residues at the C-terminus. Presents an EBV/HHV-4 epitope derived from BZLF1 (SELEIKRY). May present to CD8-positive T cells an antigenic peptide derived from MAGEA3 (MEVDPIGHLY), triggering an anti-tumor immune response. May display a broad repertoire of self-peptides with a preference for peptides derived from RNA-binding proteins. In terms of biological role, allele B*27:05: Presents to CD8-positive T cells immunodominant viral epitopes derived from HCV POLG (ARMILMTHF), HIV-1 gag (KRWIILGLNK), IAV NP (SRYWAIRTR), SARS-CoV-2 N/nucleoprotein (QRNAPRITF), EBV/HHV-4 EBNA4 (HRCQAIRKK) and EBV/HHV-4 EBNA6 (RRIYDLIEL), conferring longterm protection against viral infection. Can present self-peptides derived from cytosolic and nuclear proteins. All peptides carry an Arg at position 2. The peptide-bound form interacts with NK cell inhibitory receptor KIR3DL1 and inhibits NK cell activation in a peptide-specific way, being particularly sensitive to the nature of the amino acid side chain at position 8 of the antigenic peptide. KIR3DL1 fails to recognize HLA-B*27:05 in complex with B2M and EBV/HHV-4 EBNA6 (RRIYDLIEL) peptide, which can lead to increased activation of NK cells during infection. May present an altered repertoire of peptides in the absence of TAP1-TAP2 and TAPBPL. Its function is as follows. Allele B*40:01: Presents immunodominant viral epitopes derived from EBV/HHV-4 LMP2 (IEDPPFNSL) and SARS-CoV-2 N/nucleoprotein (MEVTPSGTWL), triggering memory CD8-positive T cell response. Displays self-peptides sharing a signature motif, namely a Glu at position 2 and a Leu anchor residue at the C-terminus. Allele B*41:01: Displays self-peptides sharing a signature motif, namely a Glu at position 2 and Ala or Pro anchor residues at the C-terminus. Functionally, allele B*44:02: Presents immunodominant viral epitopes derived from EBV/HHV-4 EBNA4 (VEITPYKPTW) and EBNA6 (AEGGVGWRHW, EENLLDFVRF), triggering memory CD8-positive T cell response. Displays self-peptides sharing a signature motif, namely a Glu at position 2 and Phe, Tyr or Trp anchor residues at the C-terminus. In terms of biological role, allele B*45:01: Displays self-peptides sharing a signature motif, namely a Glu at position 2 and Ala or Pro anchor residues at the C-terminus. Its function is as follows. Allele B*46:01: Preferentially presents nonameric peptides sharing a signature motif, namely Ala and Leu at position 2 and Tyr, Phe, Leu, or Met anchor residues at the C-terminus. The peptide-bound form interacts with KIR2DL3 and inhibits NK cell cytotoxic response in a peptide-specific way. Allele B*47:01: Displays self-peptides sharing a signature motif, namely an Asp at position 2 and Leu or Met anchor residues at the C-terminus. Functionally, allele B*49:01: Displays self-peptides sharing a signature motif, namely a Glu at position 2 and Ile or Val anchor residues at the C-terminus. In terms of biological role, allele B*50:01: Displays self-peptides sharing a signature motif, namely a Glu at position 2 and Ala or Pro anchor residues at the C-terminus. Its function is as follows. Allele B*51:01: Presents an octomeric HIV-1 epitope derived from gag-pol (TAFTIPSI) to the public TRAV17/TRBV7-3 TCR clonotype, strongly suppressing HIV-1 replication. Allele B*54:01: Displays peptides sharing a common signature motif, namely a Pro residue at position 2 and Ala anchor residue at the C-terminus. Functionally, allele B*55:01: Displays peptides sharing a common signature motif, namely a Pro residue at position 2 and Ala anchor residue at the C-terminus. In terms of biological role, allele B*56:01: Displays peptides sharing a common signature motif, namely a Pro residue at position 2 and Ala anchor residue at the C-terminus. Its function is as follows. Allele B*57:01: The peptide-bound form recognizes KIR3DL1 and inhibits NK cell cytotoxic response. Presents HIV gag peptides (immunodominant KAFSPEVIPMF and subdominant KALGPAATL epitopes) predominantly to CD8-positive T cell clones expressing a TRAV41-containing TCR, triggering HLA-B-restricted T cell responses. Allele B*67:01: Displays peptides sharing a common signature motif, namely a Pro residue at position 2 and Leu anchor residue at the C-terminus. The polypeptide is HLA class I histocompatibility antigen, B alpha chain (Homo sapiens (Human)).